The sequence spans 395 residues: Vibriobactin-specific isochorismate synthase (395 aa).

Belongs to the isochorismate synthase family.

The enzyme catalyses chorismate = isochorismate. It participates in siderophore biosynthesis; vibriobactin biosynthesis. This Vibrio cholerae serotype O1 (strain ATCC 39315 / El Tor Inaba N16961) protein is Vibriobactin-specific isochorismate synthase (vibC).